The sequence spans 407 residues: Argininosuccinate synthase (407 aa).

ATP contacts are provided by residues 16–24 (AYSGGLDTS) and alanine 44. Residues tyrosine 96 and serine 101 each contribute to the L-citrulline site. Glycine 126 provides a ligand contact to ATP. 3 residues coordinate L-aspartate: threonine 128, asparagine 132, and aspartate 133. Residue asparagine 132 participates in L-citrulline binding. Residues arginine 136, serine 185, serine 194, glutamate 270, and tyrosine 282 each coordinate L-citrulline.

This sequence belongs to the argininosuccinate synthase family. Type 1 subfamily. Homotetramer.

The protein localises to the cytoplasm. The catalysed reaction is L-citrulline + L-aspartate + ATP = 2-(N(omega)-L-arginino)succinate + AMP + diphosphate + H(+). Its pathway is amino-acid biosynthesis; L-arginine biosynthesis; L-arginine from L-ornithine and carbamoyl phosphate: step 2/3. In Shewanella sp. (strain W3-18-1), this protein is Argininosuccinate synthase.